A 463-amino-acid chain; its full sequence is D(2)-like dopamine receptor (463 aa).

Residues 1-35 (MDVFTQYAYNDSIFDNGTWSANETTKDETHPYNYY) are Extracellular-facing. N-linked (GlcNAc...) asparagine glycans are attached at residues asparagine 10, asparagine 16, and asparagine 22. A helical transmembrane segment spans residues 36 to 58 (AMLLTLLIFVIVFGNVLVCMAVS). At 59–68 (REKALQTTTN) the chain is on the cytoplasmic side. A helical transmembrane segment spans residues 69-91 (YLIVSLAVADLLVATLVMPWVVY). Topologically, residues 92–106 (LEVVGEWRFSKIHCD) are extracellular. Cysteine 105 and cysteine 183 are joined by a disulfide. A helical transmembrane segment spans residues 107-128 (IFVTLDVMMCTASILNLCAISI). Over 129-149 (DRYTAVAMPMLYNTRYSSRRR) the chain is Cytoplasmic. A helical transmembrane segment spans residues 150–170 (VTVMISVVWVLSFAISCPLLF). Residues 171 to 189 (GLNNTATRDQSLCFIANPA) lie on the Extracellular side of the membrane. The chain crosses the membrane as a helical span at residues 190-214 (FVVYSSIVSFYVPFIVTLLVYVQIY). Topologically, residues 215–392 (VVLRKRRKRV…SQQKEKKATQ (178 aa)) are cytoplasmic. The tract at residues 295-362 (CGGSHKQPPP…KEAQGNPAPV (68 aa)) is disordered. A compositionally biased stretch (polar residues) spans 315–329 (PATSHQLLMSTKANA). The span at 341 to 353 (EGQRTEKNGDPTK) shows a compositional bias: basic and acidic residues. The helical transmembrane segment at 393-414 (MLAIVLGVFIICWLPFFITHIL) threads the bilayer. The Extracellular segment spans residues 415-429 (NTHCTRCKVPAEMYN). A disulfide bridge connects residues cysteine 418 and cysteine 421. The chain crosses the membrane as a helical span at residues 430–451 (AFTWLGYVNSAVNPIIYTTFNV). Residues 452-463 (EFRKAFIKILHC) lie on the Cytoplasmic side of the membrane.

The protein belongs to the G-protein coupled receptor 1 family.

It localises to the cell membrane. In terms of biological role, receptor for dopamine. This chain is D(2)-like dopamine receptor (d215), found in Takifugu rubripes (Japanese pufferfish).